The primary structure comprises 150 residues: SsrA-binding protein (150 aa).

It belongs to the SmpB family.

It is found in the cytoplasm. Required for rescue of stalled ribosomes mediated by trans-translation. Binds to transfer-messenger RNA (tmRNA), required for stable association of tmRNA with ribosomes. tmRNA and SmpB together mimic tRNA shape, replacing the anticodon stem-loop with SmpB. tmRNA is encoded by the ssrA gene; the 2 termini fold to resemble tRNA(Ala) and it encodes a 'tag peptide', a short internal open reading frame. During trans-translation Ala-aminoacylated tmRNA acts like a tRNA, entering the A-site of stalled ribosomes, displacing the stalled mRNA. The ribosome then switches to translate the ORF on the tmRNA; the nascent peptide is terminated with the 'tag peptide' encoded by the tmRNA and targeted for degradation. The ribosome is freed to recommence translation, which seems to be the essential function of trans-translation. The polypeptide is SsrA-binding protein (Bacteroides thetaiotaomicron (strain ATCC 29148 / DSM 2079 / JCM 5827 / CCUG 10774 / NCTC 10582 / VPI-5482 / E50)).